The chain runs to 243 residues: 7-carboxy-7-deazaguanine synthase (243 aa).

Substrate-binding positions include 9 to 11 (IMG) and R24. The Radical SAM core domain occupies 15–243 (YIGRRFIFVR…IQMHKYLGML (229 aa)). Residues C28, C32, and C35 each coordinate [4Fe-4S] cluster. T84 lines the substrate pocket. An S-adenosyl-L-methionine-binding site is contributed by G86.

This sequence belongs to the radical SAM superfamily. 7-carboxy-7-deazaguanine synthase family. As to quaternary structure, homodimer. [4Fe-4S] cluster serves as cofactor. S-adenosyl-L-methionine is required as a cofactor. It depends on Mg(2+) as a cofactor.

It carries out the reaction 6-carboxy-5,6,7,8-tetrahydropterin + H(+) = 7-carboxy-7-deazaguanine + NH4(+). Its pathway is purine metabolism; 7-cyano-7-deazaguanine biosynthesis. Functionally, catalyzes the complex heterocyclic radical-mediated conversion of 6-carboxy-5,6,7,8-tetrahydropterin (CPH4) to 7-carboxy-7-deazaguanine (CDG), a step common to the biosynthetic pathways of all 7-deazapurine-containing compounds. This Methanocaldococcus jannaschii (strain ATCC 43067 / DSM 2661 / JAL-1 / JCM 10045 / NBRC 100440) (Methanococcus jannaschii) protein is 7-carboxy-7-deazaguanine synthase.